The primary structure comprises 151 residues: 6,7-dimethyl-8-ribityllumazine synthase (151 aa).

5-amino-6-(D-ribitylamino)uracil is bound by residues F18, 49–51 (ALE), and 74–76 (CVI). Position 79 to 80 (79 to 80 (ET)) interacts with (2S)-2-hydroxy-3-oxobutyl phosphate. H82 functions as the Proton donor in the catalytic mechanism. A 5-amino-6-(D-ribitylamino)uracil-binding site is contributed by N107. A (2S)-2-hydroxy-3-oxobutyl phosphate-binding site is contributed by R121.

Belongs to the DMRL synthase family.

The enzyme catalyses (2S)-2-hydroxy-3-oxobutyl phosphate + 5-amino-6-(D-ribitylamino)uracil = 6,7-dimethyl-8-(1-D-ribityl)lumazine + phosphate + 2 H2O + H(+). It functions in the pathway cofactor biosynthesis; riboflavin biosynthesis; riboflavin from 2-hydroxy-3-oxobutyl phosphate and 5-amino-6-(D-ribitylamino)uracil: step 1/2. Catalyzes the formation of 6,7-dimethyl-8-ribityllumazine by condensation of 5-amino-6-(D-ribitylamino)uracil with 3,4-dihydroxy-2-butanone 4-phosphate. This is the penultimate step in the biosynthesis of riboflavin. In Bartonella tribocorum (strain CIP 105476 / IBS 506), this protein is 6,7-dimethyl-8-ribityllumazine synthase.